The chain runs to 1053 residues: Probable sucrose-phosphate synthase (1053 aa).

Over residues 103–115 (RRQERERGRREAV) the composition is skewed to basic and acidic residues. 2 disordered regions span residues 103–127 (RRQE…EGEK) and 673–693 (LRSI…DSLR).

It belongs to the glycosyltransferase 1 family. In terms of assembly, homodimer or homotetramer.

The enzyme catalyses beta-D-fructose 6-phosphate + UDP-alpha-D-glucose = sucrose 6(F)-phosphate + UDP + H(+). It functions in the pathway glycan biosynthesis; sucrose biosynthesis; sucrose from D-fructose 6-phosphate and UDP-alpha-D-glucose: step 1/2. Activity is regulated by phosphorylation and moderated by concentration of metabolites and light. Its function is as follows. Plays a role in photosynthetic sucrose synthesis by catalyzing the rate-limiting step of sucrose biosynthesis from UDP-glucose and fructose- 6-phosphate. Involved in the regulation of carbon partitioning in the leaves of plants. May regulate the synthesis of sucrose and therefore play a major role as a limiting factor in the export of photoassimilates out of the leaf. Plays a role for sucrose availability that is essential for plant growth and fiber elongation. This is Probable sucrose-phosphate synthase (SPS) from Solanum tuberosum (Potato).